A 420-amino-acid chain; its full sequence is Serine--tRNA ligase (420 aa).

228-230 (TAE) is a binding site for L-serine. Residue 259–261 (RSE) coordinates ATP. Residue Glu-282 coordinates L-serine. 346-349 (EISS) contributes to the ATP binding site. Ser-382 contributes to the L-serine binding site.

The protein belongs to the class-II aminoacyl-tRNA synthetase family. Type-1 seryl-tRNA synthetase subfamily. Homodimer. The tRNA molecule binds across the dimer.

The protein localises to the cytoplasm. It catalyses the reaction tRNA(Ser) + L-serine + ATP = L-seryl-tRNA(Ser) + AMP + diphosphate + H(+). The catalysed reaction is tRNA(Sec) + L-serine + ATP = L-seryl-tRNA(Sec) + AMP + diphosphate + H(+). Its pathway is aminoacyl-tRNA biosynthesis; selenocysteinyl-tRNA(Sec) biosynthesis; L-seryl-tRNA(Sec) from L-serine and tRNA(Sec): step 1/1. In terms of biological role, catalyzes the attachment of serine to tRNA(Ser). Is also able to aminoacylate tRNA(Sec) with serine, to form the misacylated tRNA L-seryl-tRNA(Sec), which will be further converted into selenocysteinyl-tRNA(Sec). The chain is Serine--tRNA ligase from Mycoplasmoides gallisepticum (strain R(low / passage 15 / clone 2)) (Mycoplasma gallisepticum).